A 201-amino-acid polypeptide reads, in one-letter code: Small ribosomal subunit protein uS4 (201 aa).

The S4 RNA-binding domain maps to 91–151 (SRLDNVVYRA…EKSRSMLWFE (61 aa)).

This sequence belongs to the universal ribosomal protein uS4 family. As to quaternary structure, part of the 30S ribosomal subunit. Contacts protein S5. The interaction surface between S4 and S5 is involved in control of translational fidelity.

Functionally, one of the primary rRNA binding proteins, it binds directly to 16S rRNA where it nucleates assembly of the body of the 30S subunit. In terms of biological role, with S5 and S12 plays an important role in translational accuracy. This is Small ribosomal subunit protein uS4 from Corynebacterium jeikeium (strain K411).